A 259-amino-acid chain; its full sequence is Phosphatidylglycerol--prolipoprotein diacylglyceryl transferase (259 aa).

The next 4 helical transmembrane spans lie at 10-30, 50-70, 86-106, and 112-132; these read IGLL…LFAY, IISW…ILFY, WKGG…MYIF, and IKFL…IFLG. Arginine 133 is a binding site for a 1,2-diacyl-sn-glycero-3-phospho-(1'-sn-glycerol). 3 helical membrane-spanning segments follow: residues 169 to 189, 197 to 217, and 227 to 247; these read LYEA…LFFF, GMLF…IEFV, and ILFN…ILGI.

It belongs to the Lgt family.

The protein localises to the cell inner membrane. It catalyses the reaction L-cysteinyl-[prolipoprotein] + a 1,2-diacyl-sn-glycero-3-phospho-(1'-sn-glycerol) = an S-1,2-diacyl-sn-glyceryl-L-cysteinyl-[prolipoprotein] + sn-glycerol 1-phosphate + H(+). It participates in protein modification; lipoprotein biosynthesis (diacylglyceryl transfer). Its function is as follows. Catalyzes the transfer of the diacylglyceryl group from phosphatidylglycerol to the sulfhydryl group of the N-terminal cysteine of a prolipoprotein, the first step in the formation of mature lipoproteins. This chain is Phosphatidylglycerol--prolipoprotein diacylglyceryl transferase, found in Ehrlichia ruminantium (strain Welgevonden).